The primary structure comprises 131 residues: Fluoride-specific ion channel FluC 1 (131 aa).

4 helical membrane passes run 4–24 (LALPAWQASLVAIGAVPGAWL), 40–60 (HWGTFAVNMVAAFALGLVLAL), 73–93 (LILLIGVGFFGSLSTFSTFAV), and 108–128 (LVLAVGSILGGLLAVAAGVGL). Residues glycine 83 and serine 86 each coordinate Na(+).

The protein belongs to the fluoride channel Fluc/FEX (TC 1.A.43) family.

The protein localises to the cell inner membrane. It carries out the reaction fluoride(in) = fluoride(out). Its activity is regulated as follows. Na(+) is not transported, but it plays an essential structural role and its presence is essential for fluoride channel function. Functionally, fluoride-specific ion channel. Important for reducing fluoride concentration in the cell, thus reducing its toxicity. This chain is Fluoride-specific ion channel FluC 1, found in Prochlorococcus marinus (strain MIT 9313).